Here is an 892-residue protein sequence, read N- to C-terminus: Leucine--tRNA ligase (892 aa).

The short motif at 42–52 is the 'HIGH' region element; the sequence is PYPSGKLHMGH. A 'KMSKS' region motif is present at residues 640 to 644; that stretch reads TMSKS. An ATP-binding site is contributed by lysine 643.

This sequence belongs to the class-I aminoacyl-tRNA synthetase family.

The protein resides in the cytoplasm. It carries out the reaction tRNA(Leu) + L-leucine + ATP = L-leucyl-tRNA(Leu) + AMP + diphosphate. The sequence is that of Leucine--tRNA ligase from Albidiferax ferrireducens (strain ATCC BAA-621 / DSM 15236 / T118) (Rhodoferax ferrireducens).